The sequence spans 257 residues: tRNA pseudouridine synthase A (257 aa).

Residue aspartate 43 is the Nucleophile of the active site. Tyrosine 94 is a binding site for substrate.

It belongs to the tRNA pseudouridine synthase TruA family.

It carries out the reaction uridine(38/39/40) in tRNA = pseudouridine(38/39/40) in tRNA. Its function is as follows. Formation of pseudouridine at positions 38, 39 and 40 in the anticodon stem and loop of transfer RNAs. The polypeptide is tRNA pseudouridine synthase A (Pyrobaculum calidifontis (strain DSM 21063 / JCM 11548 / VA1)).